A 101-amino-acid polypeptide reads, in one-letter code: Small ribosomal subunit protein bS18c (101 aa).

The interval 82–101 (KQFERAESTPRTPGPRTRNK) is disordered.

This sequence belongs to the bacterial ribosomal protein bS18 family. As to quaternary structure, part of the 30S ribosomal subunit.

The protein localises to the plastid. The protein resides in the chloroplast. This Platanus occidentalis (Sycamore) protein is Small ribosomal subunit protein bS18c.